Here is a 150-residue protein sequence, read N- to C-terminus: Meiotic expression up-regulated protein 15 (150 aa).

This is Meiotic expression up-regulated protein 15 (meu15) from Schizosaccharomyces pombe (strain 972 / ATCC 24843) (Fission yeast).